Reading from the N-terminus, the 286-residue chain is Small ribosomal subunit protein uS2 (286 aa).

Residues 213–286 (EEQAQNNKWA…GAQEGGEWGS (74 aa)) are disordered. The segment covering 227–241 (SPALSAAVPSSAAPV) has biased composition (low complexity). A compositionally biased stretch (polar residues) spans 244 to 270 (WSSSPSKETTEWGASNTAAAAKSSWSN). Residues 274–286 (GEWGAQEGGEWGS) show a composition bias toward gly residues.

Belongs to the universal ribosomal protein uS2 family. As to quaternary structure, component of the small ribosomal subunit. Mature ribosomes consist of a small (40S) and a large (60S) subunit. The 40S subunit contains about 33 different proteins and 1 molecule of RNA (18S). The 60S subunit contains about 49 different proteins and 3 molecules of RNA (28S, 5.8S and 5S). Interacts with ribosomal protein S21.

It is found in the cytoplasm. Required for the assembly and/or stability of the 40S ribosomal subunit. Required for the processing of the 20S rRNA-precursor to mature 18S rRNA in a late step of the maturation of 40S ribosomal subunits. This is Small ribosomal subunit protein uS2 from Trichoplax adhaerens (Trichoplax reptans).